Reading from the N-terminus, the 155-residue chain is Putative pre-16S rRNA nuclease (155 aa).

It belongs to the YqgF nuclease family.

It localises to the cytoplasm. Its function is as follows. Could be a nuclease involved in processing of the 5'-end of pre-16S rRNA. This is Putative pre-16S rRNA nuclease from Paramagnetospirillum magneticum (strain ATCC 700264 / AMB-1) (Magnetospirillum magneticum).